We begin with the raw amino-acid sequence, 225 residues long: PKHD-type hydroxylase YbiX (225 aa).

The region spanning 78-177 (TLSTPLFNRY…RVASFMWIQS (100 aa)) is the Fe2OG dioxygenase domain. Fe cation-binding residues include histidine 96, aspartate 98, and histidine 158. Residue arginine 168 participates in 2-oxoglutarate binding.

Requires Fe(2+) as cofactor. It depends on L-ascorbate as a cofactor.

The protein is PKHD-type hydroxylase YbiX of Escherichia coli O6:K15:H31 (strain 536 / UPEC).